We begin with the raw amino-acid sequence, 407 residues long: Arginine deiminase (407 aa).

C397 functions as the Amidino-cysteine intermediate in the catalytic mechanism.

It belongs to the arginine deiminase family.

The protein resides in the cytoplasm. It carries out the reaction L-arginine + H2O = L-citrulline + NH4(+). Its pathway is amino-acid degradation; L-arginine degradation via ADI pathway; carbamoyl phosphate from L-arginine: step 1/2. This chain is Arginine deiminase, found in Salmonella choleraesuis (strain SC-B67).